Consider the following 258-residue polypeptide: Acyl-[acyl-carrier-protein]--UDP-N-acetylglucosamine O-acyltransferase (258 aa).

The protein belongs to the transferase hexapeptide repeat family. LpxA subfamily. Homotrimer.

It localises to the cytoplasm. It catalyses the reaction a (3R)-hydroxyacyl-[ACP] + UDP-N-acetyl-alpha-D-glucosamine = a UDP-3-O-[(3R)-3-hydroxyacyl]-N-acetyl-alpha-D-glucosamine + holo-[ACP]. Its pathway is glycolipid biosynthesis; lipid IV(A) biosynthesis; lipid IV(A) from (3R)-3-hydroxytetradecanoyl-[acyl-carrier-protein] and UDP-N-acetyl-alpha-D-glucosamine: step 1/6. Functionally, involved in the biosynthesis of lipid A, a phosphorylated glycolipid that anchors the lipopolysaccharide to the outer membrane of the cell. The polypeptide is Acyl-[acyl-carrier-protein]--UDP-N-acetylglucosamine O-acyltransferase (Thermodesulfovibrio yellowstonii (strain ATCC 51303 / DSM 11347 / YP87)).